The chain runs to 922 residues: Autophagy-related protein 9B (922 aa).

2 disordered regions span residues 1 to 22 (MVRRTGWGGSRRQRGRWGDLGP) and 85 to 144 (TPHN…MGPL). Residues 1-206 (MVRRTGWGGS…KIYSYHQRNG (206 aa)) are Cytoplasmic-facing. Over residues 85 to 114 (TPHNVLPTPTTPSTQAHPTMIHTSASPSWG) the composition is skewed to polar residues. A compositionally biased stretch (low complexity) spans 115–124 (SHSTPPLASA). The Tyrosine-based sorting signal signature appears at 150 to 153 (YERL). The helical transmembrane segment at 207–227 (FACILLEDVFQLGQFIFIVTF) threads the bilayer. The Lumenal segment spans residues 228 to 275 (TTFLLRCVDYNVLFNNQPKNHTRRGPLHSKVTLSDAILPSAQCAEKIH). A helical membrane pass occupies residues 276 to 296 (DSPLLVFLLVLAAGFWLFQLL). Topologically, residues 297-437 (RSVCNLFSYW…GVLANRWRRT (141 aa)) are cytoplasmic. The stretch at 438-458 (VLLLAAVNLALSPLVLAWQVL) is an intramembrane region. Over 459-523 (HAFYSHVELL…RAAEPPAPLR (65 aa)) the chain is Cytoplasmic. The helical transmembrane segment at 524–544 (ALLARQLVFFSGALFAALLVL) threads the bilayer. Residues 545–550 (TIYDED) are Lumenal-facing. Residues 551–571 (VLAVEHVLTTMTALGVTATVA) form a helical membrane-spanning segment. Residues 572-624 (RSFIPEEQCQGRSSQLLLQAALAHMHYLPEEPGATGARASSYWQMAQLLQYRA) are Cytoplasmic-facing. The stretch at 625–645 (VSLLEELLSPLLTPLFLLFWF) is an intramembrane region. At 646-922 (RPRALEIIDF…QKEPLTGPLH (277 aa)) the chain is on the cytoplasmic side. Residues 848-922 (ELWGEASASS…QKEPLTGPLH (75 aa)) are disordered. 2 stretches are compositionally biased toward low complexity: residues 854-870 (SASSPSRPWSSPSQPGS) and 877-889 (SWSSDGSSPASSP). Polar residues predominate over residues 890–899 (RQQWGTQRAQ).

Belongs to the ATG9 family. In terms of assembly, homotrimer; forms a homotrimer with a central pore that forms a path between the two membrane leaflets. As to expression, expressed in heart, brain, and placenta and testis.

Its subcellular location is the preautophagosomal structure membrane. The catalysed reaction is a 1,2-diacyl-sn-glycero-3-phosphocholine(in) = a 1,2-diacyl-sn-glycero-3-phosphocholine(out). It carries out the reaction a 1,2-diacyl-sn-glycero-3-phospho-L-serine(in) = a 1,2-diacyl-sn-glycero-3-phospho-L-serine(out). The enzyme catalyses a 1,2-diacyl-sn-glycero-3-phosphoethanolamine(in) = a 1,2-diacyl-sn-glycero-3-phosphoethanolamine(out). Phospholipid scramblase involved in autophagy by mediating autophagosomal membrane expansion. Cycles between the preautophagosomal structure/phagophore assembly site (PAS) and the cytoplasmic vesicle pool and supplies membrane for the growing autophagosome. Lipid scramblase activity plays a key role in preautophagosomal structure/phagophore assembly by distributing the phospholipids that arrive through ATG2 (ATG2A or ATG2B) from the cytoplasmic to the luminal leaflet of the bilayer, thereby driving autophagosomal membrane expansion. In addition to autophagy, also plays a role in necrotic cell death. This chain is Autophagy-related protein 9B, found in Mus musculus (Mouse).